Reading from the N-terminus, the 145-residue chain is Large ribosomal subunit protein bL9 (145 aa).

Belongs to the bacterial ribosomal protein bL9 family.

Functionally, binds to the 23S rRNA. This chain is Large ribosomal subunit protein bL9, found in Ureaplasma urealyticum serovar 10 (strain ATCC 33699 / Western).